Here is a 451-residue protein sequence, read N- to C-terminus: Trigger factor (451 aa).

The PPIase FKBP-type domain maps to 173 to 258; sequence GDRVTLDFVG…LKKIEWAHLP (86 aa).

Belongs to the FKBP-type PPIase family. Tig subfamily.

Its subcellular location is the cytoplasm. It catalyses the reaction [protein]-peptidylproline (omega=180) = [protein]-peptidylproline (omega=0). Involved in protein export. Acts as a chaperone by maintaining the newly synthesized protein in an open conformation. Functions as a peptidyl-prolyl cis-trans isomerase. The sequence is that of Trigger factor from Cupriavidus pinatubonensis (strain JMP 134 / LMG 1197) (Cupriavidus necator (strain JMP 134)).